The chain runs to 496 residues: Sodium/sialic acid symporter SiaT (496 aa).

The Periplasmic segment spans residues 1–7 (MQLHDFG). The helical transmembrane segment at 8-29 (FINYAVLFGYLAAMLLVGVYFS) threads the bilayer. Topologically, residues 30–46 (KRQKTADDYFRGGGRVP) are cytoplasmic. Residues 47-59 (GWAAGVSVFATTL) form a helical membrane-spanning segment. A Na(+)-binding site is contributed by alanine 56. Threonine 58 is an N-acetyl-alpha-neuraminate binding site. Leucine 59 is a Na(+) binding site. N-acetyl-alpha-neuraminate contacts are provided by serine 60, threonine 63, and glutamine 82. The Periplasmic segment spans residues 60-76 (SSITFMSIPAKAYTSDW). A helical transmembrane segment spans residues 77 to 92 (TFIIGQYLAIAILPLV). Over 93-116 (FYFYIPFFRKLKITSAYEYLEARF) the chain is Cytoplasmic. A helical transmembrane segment spans residues 117 to 144 (DVRSRLFASLSFMLFHIGRVAIITYLTV). Residue arginine 135 coordinates N-acetyl-alpha-neuraminate. The Periplasmic portion of the chain corresponds to 145-154 (LALRPFMGID). A helical transmembrane segment spans residues 155 to 172 (PVVLIVLISLLCIIYTWM). At 173–174 (GG) the chain is on the cytoplasmic side. Residues 175–199 (IEGVIWTDVIQGLLLSGGAVLIFIM) traverse the membrane as a helical segment. Na(+) is bound at residue aspartate 182. Residues 200-235 (ICFKVDGGISEIFTTTAQADKFFPTTQWRWSWTDST) are Periplasmic-facing. The chain crosses the membrane as a helical span at residues 236–252 (IPVLMIGFLFANIQQFT). The Cytoplasmic portion of the chain corresponds to 253-272 (ASQDVVQRYIVTDSIKETKR). Residues 273–292 (TLITNAKLVAIIPIFFFAIG) form a helical membrane-spanning segment. The Periplasmic segment spans residues 293–325 (SALFVYYQQNPSLLPAGFNTGGILPLFIVTEMP). A helical membrane pass occupies residues 326-356 (IGIAGLIIAAIFAAAQSSISSSLNSISSCFN). Residues alanine 339, serine 342, serine 343, serine 345, and serine 346 each coordinate Na(+). Over 357 to 374 (SDIYTRLSKSSPSPEQKM) the chain is Cytoplasmic. The helical transmembrane segment at 375–396 (KVAKLVIIVAGIFSSLAAIWLV) threads the bilayer. Residues 397–403 (LSDEAEI) lie on the Periplasmic side of the membrane. The chain crosses the membrane as a helical span at residues 404 to 427 (WDAFNSLIGLMGGPMTGLFMLGIF). Topologically, residues 428–432 (VKRAN) are cytoplasmic. A helical transmembrane segment spans residues 433–453 (AGSAVVGIIVSIIAVLAARYG). Residues 454-457 (SDLN) lie on the Periplasmic side of the membrane. Residues 458-479 (FFFYGVIGSMSVVIAGTITAPL) form a helical membrane-spanning segment. Topologically, residues 480–496 (FAPAKQLSLDDSETSEN) are cytoplasmic.

It belongs to the sodium:solute symporter (SSF) (TC 2.A.21) family.

It localises to the cell inner membrane. It catalyses the reaction N-acetyl-alpha-neuraminate(out) + 2 Na(+)(out) = N-acetyl-alpha-neuraminate(in) + 2 Na(+)(in). Its activity is regulated as follows. Both Na(+) sites regulate Neu5Ac transport. The binding energy of the second Na(+) ion may be used to allosterically stabilize the substrate without directly coordinating it. In the absence of external Na(+), the rate is reduced by 78%. Symporter that uses the Na(+) gradient as the driving force for the uptake of the sialic acid N-acetylneuraminic acid (Neu5Ac). It allows the use of host-derived Neu5Ac as an energy source by P.mirabilis. Also binds N-glycolylneuraminic acid (Neu5Gc) and ketodeoxynonulosonic acid (KDN). Shows the highest affinity for Neu5Ac and Neu5Gc, which commonly occupy the terminal non-reducing position of mammalian cell surface glycoconjugates. The sequence is that of Sodium/sialic acid symporter SiaT from Proteus mirabilis (strain HI4320).